The primary structure comprises 146 residues: Small ribosomal subunit protein uS5 (146 aa).

The 64-residue stretch at phenylalanine 8 to valine 71 folds into the S5 DRBM domain.

The protein belongs to the universal ribosomal protein uS5 family. As to quaternary structure, part of the 30S ribosomal subunit. Contacts proteins S4 and S8.

With S4 and S12 plays an important role in translational accuracy. Functionally, located at the back of the 30S subunit body where it stabilizes the conformation of the head with respect to the body. The polypeptide is Small ribosomal subunit protein uS5 (Sulfurimonas denitrificans (strain ATCC 33889 / DSM 1251) (Thiomicrospira denitrificans (strain ATCC 33889 / DSM 1251))).